A 212-amino-acid chain; its full sequence is 3-isopropylmalate dehydratase small subunit 1 (212 aa).

It belongs to the LeuD family. LeuD type 1 subfamily. In terms of assembly, heterodimer of LeuC and LeuD.

It carries out the reaction (2R,3S)-3-isopropylmalate = (2S)-2-isopropylmalate. Its pathway is amino-acid biosynthesis; L-leucine biosynthesis; L-leucine from 3-methyl-2-oxobutanoate: step 2/4. Functionally, catalyzes the isomerization between 2-isopropylmalate and 3-isopropylmalate, via the formation of 2-isopropylmaleate. The polypeptide is 3-isopropylmalate dehydratase small subunit 1 (Chromobacterium violaceum (strain ATCC 12472 / DSM 30191 / JCM 1249 / CCUG 213 / NBRC 12614 / NCIMB 9131 / NCTC 9757 / MK)).